A 274-amino-acid polypeptide reads, in one-letter code: NADH-ubiquinone oxidoreductase chain 2 (274 aa).

The next 8 membrane-spanning stretches (helical) occupy residues 28-48 (MIIM…FWFP), 54-74 (LTWM…LMLI), 79-99 (IKYL…IGGL), 107-127 (LMAF…MISE), 128-148 (SIWL…TFMF), 171-191 (FTLF…GFLP), 206-226 (FLLL…LRIC), and 254-274 (LIMT…YFMF).

The protein belongs to the complex I subunit 2 family.

The protein resides in the mitochondrion inner membrane. The catalysed reaction is a ubiquinone + NADH + 5 H(+)(in) = a ubiquinol + NAD(+) + 4 H(+)(out). Core subunit of the mitochondrial membrane respiratory chain NADH dehydrogenase (Complex I) that is believed to belong to the minimal assembly required for catalysis. Complex I functions in the transfer of electrons from NADH to the respiratory chain. The immediate electron acceptor for the enzyme is believed to be ubiquinone. This Drosophila mauritiana (Fruit fly) protein is NADH-ubiquinone oxidoreductase chain 2 (mt:ND2).